A 544-amino-acid chain; its full sequence is Probable acyl-activating enzyme 8 (544 aa).

It belongs to the ATP-dependent AMP-binding enzyme family. As to expression, expressed at low levels in roots, leaves, stems, flowers and developing seeds.

Its function is as follows. May act as an acid--thiol ligase that activates carboxylic acids by forming acyl-CoAs. The chain is Probable acyl-activating enzyme 8 (AAE8) from Arabidopsis thaliana (Mouse-ear cress).